The following is a 401-amino-acid chain: MGNKLGRKRQVVEERYTKPQGLYVNKDVDVKKLRKLIVESKLAPCYPGDDESCHDLEECPICFLYYPSLNRSRCCMKSICTECFLQMKNPNSARPTQCPFCKTPNYAVEYRGVKSKEEKGIEQVEEQRVIEAKIRMRQKEMQDDEEKMQKRLESCSSSTSAMTGEMEYGSTSAISYNSLMDDGEIAPSQNASVVRQHSRPRGNREDEVDVDLEELMVMEAIWLSVQETGTQRNSASGEITSSRQYVTDNHSYVSSPPRVTPIVEPATPSSSSGGLSCAISALAERQMVGESSSHNHNHNVNVSSYSMLPGNCDSYYDIEQEVDGIDNHHHHRHHYEMGETGSSNSYVSSYMTGEGFHNFPPPPPLVIVPESFEEQMMMAMAVSMAEVHATTTCAPTEVTWQ.

The RING-type; degenerate zinc-finger motif lies at 59 to 102 (CPICFLYYPSLNRSRCCMKSICTECFLQMKNPNSARPTQCPFCK). The span at 139-153 (KEMQDDEEKMQKRLE) shows a compositional bias: basic and acidic residues. Residues 139–164 (KEMQDDEEKMQKRLESCSSSTSAMTG) form a disordered region.

In terms of assembly, interacts with DA1 (via C-terminus).

The catalysed reaction is S-ubiquitinyl-[E2 ubiquitin-conjugating enzyme]-L-cysteine + [acceptor protein]-L-lysine = [E2 ubiquitin-conjugating enzyme]-L-cysteine + N(6)-ubiquitinyl-[acceptor protein]-L-lysine.. It functions in the pathway protein modification; protein ubiquitination. E3 ubiquitin-protein ligase involved in the regulation of organ and seed size. Acts synergistically with DA1 to regulate seed size. Functions synergistically with DA1 to restrict cell proliferation in the maternal integuments of ovules and developing seeds. Seems to function independently of BB. Possesses E3 ubiquitin-protein ligase activity in vitro. Polyubiquitinates DA1, DAR1 and DAR2, but not DAR3. This Arabidopsis thaliana (Mouse-ear cress) protein is E3 ubiquitin-protein ligase DA2.